The primary structure comprises 359 residues: Cytohesin-interacting protein (359 aa).

The 90-residue stretch at 77 to 166 (VVTVEKQDNG…LLTIETLNGT (90 aa)) folds into the PDZ domain. A coiled-coil region spans residues 165–188 (GTMIHRRAELEAKLQTLKQTLKKK). An interaction with CYTH1 region spans residues 166–188 (TMIHRRAELEAKLQTLKQTLKKK).

Interacts with CYTH1 and SNX27.

It is found in the cytoplasm. The protein resides in the early endosome. Its function is as follows. By its binding to cytohesin-1 (CYTH1), it modifies activation of ARFs by CYTH1 and its precise function may be to sequester CYTH1 in the cytoplasm. The chain is Cytohesin-interacting protein (Cytip) from Mus musculus (Mouse).